Reading from the N-terminus, the 390-residue chain is tRNA(Met) cytidine acetate ligase (390 aa).

ATP contacts are provided by residues 7-20, Gly-101, Asn-162, and Arg-187; that span reads VVEYNPFHNGHKLH.

Belongs to the TmcAL family.

It is found in the cytoplasm. The catalysed reaction is cytidine(34) in elongator tRNA(Met) + acetate + ATP = N(4)-acetylcytidine(34) in elongator tRNA(Met) + AMP + diphosphate. Functionally, catalyzes the formation of N(4)-acetylcytidine (ac(4)C) at the wobble position of elongator tRNA(Met), using acetate and ATP as substrates. First activates an acetate ion to form acetyladenylate (Ac-AMP) and then transfers the acetyl group to tRNA to form ac(4)C34. This chain is tRNA(Met) cytidine acetate ligase, found in Listeria monocytogenes serovar 1/2a (strain ATCC BAA-679 / EGD-e).